A 324-amino-acid polypeptide reads, in one-letter code: Pepsin-2B (324 aa).

The 308-residue stretch at 14–321 (YYGVISIGTP…DRTNNKVGFA (308 aa)) folds into the Peptidase A1 domain. The active site involves Asp32. The cysteines at positions 45 and 50 are disulfide-linked. Residues 86–109 (QDTVSVGGGSDPNQELGESQTEPG) are disordered. Positions 96–107 (DPNQELGESQTE) are enriched in polar residues. Cys206 and Cys209 are oxidised to a cystine. Asp214 is a catalytic residue. Cysteines 247 and 280 form a disulfide.

Belongs to the peptidase A1 family.

The sequence is that of Pepsin-2B from Gadus morhua (Atlantic cod).